Reading from the N-terminus, the 466-residue chain is Ribulose bisphosphate carboxylase large chain (466 aa).

Lys-5 is subject to N6,N6,N6-trimethyllysine. The substrate site is built by Asn-114 and Thr-164. The Proton acceptor role is filled by Lys-166. Position 168 (Lys-168) interacts with substrate. Residues Lys-192, Asp-194, and Glu-195 each coordinate Mg(2+). Lys-192 is subject to N6-carboxylysine. Residue His-285 is the Proton acceptor of the active site. Arg-286, His-318, and Ser-370 together coordinate substrate.

Belongs to the RuBisCO large chain family. Type I subfamily. As to quaternary structure, heterohexadecamer of 8 large chains and 8 small chains. It depends on Mg(2+) as a cofactor.

The protein localises to the plastid. It is found in the chloroplast. It catalyses the reaction 2 (2R)-3-phosphoglycerate + 2 H(+) = D-ribulose 1,5-bisphosphate + CO2 + H2O. It carries out the reaction D-ribulose 1,5-bisphosphate + O2 = 2-phosphoglycolate + (2R)-3-phosphoglycerate + 2 H(+). Functionally, ruBisCO catalyzes two reactions: the carboxylation of D-ribulose 1,5-bisphosphate, the primary event in carbon dioxide fixation, as well as the oxidative fragmentation of the pentose substrate in the photorespiration process. Both reactions occur simultaneously and in competition at the same active site. In Drosera regia (King sundew), this protein is Ribulose bisphosphate carboxylase large chain.